Consider the following 140-residue polypeptide: Alkaline proteinase inhibitor (140 aa).

A signal peptide spans 1–25; the sequence is MPSSVQATAGLLATLMMFCGEVAMA.

This sequence belongs to the protease inhibitor I38 family.

The protein resides in the periplasm. Inhibitor of the alkaline protease. The sequence is that of Alkaline proteinase inhibitor (inh) from Pseudomonas brassicacearum (strain NFM421).